A 243-amino-acid polypeptide reads, in one-letter code: Phosphoribosylaminoimidazole-succinocarboxamide synthase (243 aa).

Belongs to the SAICAR synthetase family.

It catalyses the reaction 5-amino-1-(5-phospho-D-ribosyl)imidazole-4-carboxylate + L-aspartate + ATP = (2S)-2-[5-amino-1-(5-phospho-beta-D-ribosyl)imidazole-4-carboxamido]succinate + ADP + phosphate + 2 H(+). Its pathway is purine metabolism; IMP biosynthesis via de novo pathway; 5-amino-1-(5-phospho-D-ribosyl)imidazole-4-carboxamide from 5-amino-1-(5-phospho-D-ribosyl)imidazole-4-carboxylate: step 1/2. The protein is Phosphoribosylaminoimidazole-succinocarboxamide synthase of Prochlorococcus marinus (strain MIT 9211).